A 419-amino-acid chain; its full sequence is Phospho-N-acetylmuramoyl-pentapeptide-transferase (419 aa).

10 consecutive transmembrane segments (helical) span residues 22–42 (YVSF…TVIG), 72–92 (TPTM…LLLA), 99–119 (ILLM…DDYI), 135–155 (IIGQ…NPAV), 208–228 (VLFG…FISN), 238–258 (GLAT…AYVS), 278–298 (LTIF…YNAY), 303–323 (FMGD…ALII), 328–348 (LLPI…IQVF), and 396–416 (KITV…IATL).

Belongs to the glycosyltransferase 4 family. MraY subfamily. Mg(2+) is required as a cofactor.

It localises to the cell inner membrane. The enzyme catalyses UDP-N-acetyl-alpha-D-muramoyl-L-alanyl-gamma-D-glutamyl-meso-2,6-diaminopimeloyl-D-alanyl-D-alanine + di-trans,octa-cis-undecaprenyl phosphate = di-trans,octa-cis-undecaprenyl diphospho-N-acetyl-alpha-D-muramoyl-L-alanyl-D-glutamyl-meso-2,6-diaminopimeloyl-D-alanyl-D-alanine + UMP. Its pathway is cell wall biogenesis; peptidoglycan biosynthesis. In terms of biological role, catalyzes the initial step of the lipid cycle reactions in the biosynthesis of the cell wall peptidoglycan: transfers peptidoglycan precursor phospho-MurNAc-pentapeptide from UDP-MurNAc-pentapeptide onto the lipid carrier undecaprenyl phosphate, yielding undecaprenyl-pyrophosphoryl-MurNAc-pentapeptide, known as lipid I. The sequence is that of Phospho-N-acetylmuramoyl-pentapeptide-transferase from Porphyromonas gingivalis (strain ATCC BAA-308 / W83).